The primary structure comprises 56 residues: Large ribosomal subunit protein eL37 (56 aa).

Cys19, Cys22, Cys34, and Cys37 together coordinate Zn(2+). The segment at Cys19 to Cys37 adopts a C4-type zinc-finger fold.

This sequence belongs to the eukaryotic ribosomal protein eL37 family. It depends on Zn(2+) as a cofactor.

Binds to the 23S rRNA. The chain is Large ribosomal subunit protein eL37 from Methanosarcina mazei (strain ATCC BAA-159 / DSM 3647 / Goe1 / Go1 / JCM 11833 / OCM 88) (Methanosarcina frisia).